A 169-amino-acid chain; its full sequence is Cell division inhibitor SulA (169 aa).

A compositionally biased stretch (polar residues) spans 1–13 (MFTSAHANRSAQA). Residues 1–26 (MFTSAHANRSAQASAPAGHYAHRSGE) form a disordered region. The ftsZ binding stretch occupies residues 106 to 112 (ALRTGNY). The segment at 162 to 169 (KIHSNLYH) is lon protease binding.

Belongs to the SulA family. In terms of assembly, interacts with FtsZ. In terms of processing, is rapidly cleaved and degraded by the Lon protease once DNA damage is repaired.

Functionally, component of the SOS system and an inhibitor of cell division. Accumulation of SulA causes rapid cessation of cell division and the appearance of long, non-septate filaments. In the presence of GTP, binds a polymerization-competent form of FtsZ in a 1:1 ratio, thus inhibiting FtsZ polymerization and therefore preventing it from participating in the assembly of the Z ring. This mechanism prevents the premature segregation of damaged DNA to daughter cells during cell division. The polypeptide is Cell division inhibitor SulA (Klebsiella pneumoniae subsp. pneumoniae (strain ATCC 700721 / MGH 78578)).